The sequence spans 155 residues: Small ribosomal subunit protein uS7cz/uS7cy (155 aa).

It belongs to the universal ribosomal protein uS7 family. Part of the 30S ribosomal subunit.

The protein resides in the plastid. It is found in the chloroplast. Functionally, one of the primary rRNA binding proteins, it binds directly to 16S rRNA where it nucleates assembly of the head domain of the 30S subunit. In Ceratophyllum demersum (Rigid hornwort), this protein is Small ribosomal subunit protein uS7cz/uS7cy (rps7-A).